Consider the following 300-residue polypeptide: Ribosomal protein bS6--L-glutamate ligase (300 aa).

Residues 104–287 (LQLLARQGID…IAGRMIQWIE (184 aa)) enclose the ATP-grasp domain. Residues lysine 141, 178-179 (EY), aspartate 187, and 211-213 (RSN) contribute to the ATP site. Mg(2+)-binding residues include aspartate 248, glutamate 260, and asparagine 262. Residues aspartate 248, glutamate 260, and asparagine 262 each contribute to the Mn(2+) site.

This sequence belongs to the RimK family. Mg(2+) is required as a cofactor. Mn(2+) serves as cofactor.

Functionally, an L-glutamate ligase that catalyzes the ATP-dependent post-translational addition of glutamate residues to the C-terminus of ribosomal protein bS6 (RpsF). Is also able to catalyze the synthesis of poly-alpha-glutamate in vitro, via ATP hydrolysis from unprotected glutamate as substrate. The number of glutamate residues added to either RpsF or to poly-alpha-glutamate changes with pH. The protein is Ribosomal protein bS6--L-glutamate ligase of Salmonella agona (strain SL483).